The primary structure comprises 173 residues: uncharacterized protein (173 aa).

This is an uncharacterized protein from Saccharomyces cerevisiae (strain ATCC 204508 / S288c) (Baker's yeast).